Consider the following 356-residue polypeptide: Replication factor C subunit 3 (356 aa).

The residue at position 20 (Lys-20) is an N6-acetyllysine. Ser-125 carries the post-translational modification Phosphoserine.

It belongs to the activator 1 small subunits family. Subunit of the RFC complex, an heteropentameric complex consisting of a large subunit RFC1 and four small subunits RFC2, RFC3, RFC4 and RFC5; the RFC complex interacts with PCNA. Forms an heterotetrameric complex with RFC2, RFC4 and RFC5; this complex has ATPase activity but is not stimulated by PCNA. The heterotetramer of subunits RFC2, RFC3, RFC4 and RFC5 interacts with RAD17. Interacts with CNTD1; this interaction facilitates crossover formation.

The protein resides in the nucleus. Functionally, subunit of the replication factor C (RFC) complex which acts during elongation of primed DNA templates by DNA polymerases delta and epsilon, and is necessary for ATP-dependent loading of proliferating cell nuclear antigen (PCNA) onto primed DNA. The polypeptide is Replication factor C subunit 3 (Rfc3) (Mus musculus (Mouse)).